A 238-amino-acid chain; its full sequence is MKIFICEDDPKQRENMVTIIKNYIMIEEKPMEIALATDNPYEVLEQAKNMNDIGCYFLDIQLSTDINGIKLGSEIRKHDPVGNIIFVTSHSELTYLTFVYKVAAMDFIFKDDPAELRTRIIDCLETAHTRLQLLSKDNSVETIELKRGSNSVYVQYDDIMFFESSTKSHRLIAHLDNRQIEFYGNLKELSQLDDRFFRCHNSFVVNRHNIESIDSKERIVYFKNKEHCYASVRNVKKK.

Positions 2 to 125 constitute a Response regulatory domain; it reads KIFICEDDPK…LRTRIIDCLE (124 aa). A 4-aspartylphosphate modification is found at aspartate 59. Residues 143 to 238 form the HTH LytTR-type domain; the sequence is IELKRGSNSV…YASVRNVKKK (96 aa).

It is found in the cytoplasm. Its function is as follows. Required for high-level post-exponential phase expression of a series of secreted proteins. This is Accessory gene regulator A (agrA) from Staphylococcus aureus (strain Mu50 / ATCC 700699).